Consider the following 206-residue polypeptide: Transmembrane emp24 domain-containing protein bai (206 aa).

The first 20 residues, 1–20 (MARTLLILCTLMAWAWTGEA), serve as a signal peptide directing secretion. Residues 21–172 (VMFKLTPNTQ…RDTNEKTNSR (152 aa)) are Lumenal-facing. Residues 30 to 140 (QKCLKEDIQA…LKPLEVDLKR (111 aa)) form the GOLD domain. A helical transmembrane segment spans residues 173-193 (VLFFSIFSMCCLLGLATWQVL). At 194 to 206 (YLRRYFKAKKLIE) the chain is on the cytoplasmic side.

The protein belongs to the EMP24/GP25L family.

It localises to the membrane. Its function is as follows. Eca and bai are essential, though not redundant, for dorsoventral patterning of the embryo. Specifically required during early embryogenesis for the activity of maternal tkv, while the zygotic tkv is not affected. This is Transmembrane emp24 domain-containing protein bai from Drosophila ananassae (Fruit fly).